Consider the following 375-residue polypeptide: Peptidyl-prolyl cis-trans isomerase D (375 aa).

In terms of domain architecture, PPIase cyclophilin-type spans 7 to 169; that stretch reads YFDITIANEP…QAVTISSAGV (163 aa). 3 TPR repeats span residues 217 to 250, 270 to 307, and 312 to 345; these read AGKL…LDVH, LPLL…PNLS, and GKAL…VPGD.

It belongs to the cyclophilin-type PPIase family. PPIase D subfamily.

It is found in the cytoplasm. It carries out the reaction [protein]-peptidylproline (omega=180) = [protein]-peptidylproline (omega=0). Its function is as follows. PPIases accelerate the folding of proteins. It catalyzes the cis-trans isomerization of proline imidic peptide bonds in oligopeptides. The polypeptide is Peptidyl-prolyl cis-trans isomerase D (CPR6) (Cryptococcus neoformans var. neoformans serotype D (strain JEC21 / ATCC MYA-565) (Filobasidiella neoformans)).